Here is a 305-residue protein sequence, read N- to C-terminus: MVGHAATDVPPTMAVKIFSAGVAACVADIITFPLDTAKVRLQIQGECLTSSAFRYKGVLGTIITLAKTEGPVKLYSGLPAGLQRQISFASLRIGLYDTVQEFFTTGKEASLGSKISAGLTTGGVAVFIGQPTEVVKVRLQAQSHLHGPKPRYTGTYNAYRIIATTEGLTGLWKGTTPNLTRNVIINCTELVTYDLMKEALVKNKLLADDVPCHFVSAVVAGFCTTVLSSPVDVVKTRFVNSSPGQYTSVPNCAMMMLTREGPSAFFKGFVPSFLRLGSWNIIMFVCFEQLKRELMKSRQAMDCAT.

Residues M1 to P10 are Mitochondrial intermembrane-facing. A helical transmembrane segment spans residues P11–F32. Solcar repeat units follow at residues P11–F102, A109–A199, and D208–E293. Topologically, residues P33–K73 are mitochondrial matrix. K56 contacts fatty acid 16:0. The helical transmembrane segment at L74–Y96 threads the bilayer. The Mitochondrial intermembrane segment spans residues D97–K114. The helical transmembrane segment at I115 to P131 threads the bilayer. Topologically, residues T132–T176 are mitochondrial matrix. The helical transmembrane segment at P177–Y193 threads the bilayer. Residues D194–V210 lie on the Mitochondrial intermembrane side of the membrane. The helical transmembrane segment at P211–P230 threads the bilayer. Residues V231–A264 lie on the Mitochondrial matrix side of the membrane. C252 is modified (cysteine sulfenic acid (-SOH)). Residues F265 to F287 traverse the membrane as a helical segment. K267 lines the fatty acid 16:0 pocket. At E288–T305 the chain is on the mitochondrial intermembrane side.

The protein belongs to the mitochondrial carrier (TC 2.A.29) family. In terms of assembly, most probably functions as a monomer. Binds one purine nucleotide per monomer. However, has also been suggested to function as a homodimer or a homotetramer. Tightly associates with cardiolipin in the mitochondrion inner membrane; may stabilize and regulate its activity. Post-translationally, may undergo sulfenylation upon cold exposure. May increase the sensitivity of UCP1 thermogenic function to the activation by noradrenaline probably through structural effects. May undergo ubiquitin-mediated proteasomal degradation.

It is found in the mitochondrion inner membrane. The catalysed reaction is H(+)(in) = H(+)(out). Has no constitutive proton transporter activity and has to be activated by long-chain fatty acids/LCFAs. Inhibited by purine nucleotides. Both purine nucleotides and LCFAs bind the cytosolic side of the transporter and directly compete to activate or inhibit it. Activated by noradrenaline and reactive oxygen species. Despite lacking canonical translational encoding for selenocysteine, a small pool of the protein has been observed to selectively incorporate selenocysteine at 'Cys-252'. Selenocysteine-modified protein is highly sensitive to redox modification and may constitute a pool of protein highly sensitive to activation by elevated levels of reactive oxygen species (ROS). In terms of biological role, mitochondrial protein responsible for thermogenic respiration, a specialized capacity of brown adipose tissue and beige fat that participates in non-shivering adaptive thermogenesis to temperature and diet variations and more generally to the regulation of energy balance. Functions as a long-chain fatty acid/LCFA and proton symporter, simultaneously transporting one LCFA and one proton through the inner mitochondrial membrane. However, LCFAs remaining associated with the transporter via their hydrophobic tails, it results in an apparent transport of protons activated by LCFAs. Thereby, dissipates the mitochondrial proton gradient and converts the energy of substrate oxydation into heat instead of ATP. Regulates the production of reactive oxygen species/ROS by mitochondria. The protein is Mitochondrial brown fat uncoupling protein 1 of Ovis aries (Sheep).